Here is a 210-residue protein sequence, read N- to C-terminus: Phosphate propanoyltransferase (210 aa).

Residue 26-28 participates in CoA binding; it reads VSN. Positions 30 and 32 each coordinate Zn(2+). Residues K71 and R78 each contribute to the CoA site. R84 is a binding site for phosphate. Zn(2+) is bound by residues E90, H138, H140, and H186. Residue N193 coordinates CoA.

Belongs to the PduL family. Monomer, when purified in the absence of the encapsulation peptide (EP, residues 1-27). The EP may influence oligomerization. Requires Zn(2+) as cofactor.

It localises to the bacterial microcompartment. It catalyses the reaction propanoyl-CoA + phosphate = propanoyl phosphate + CoA. Its pathway is polyol metabolism; 1,2-propanediol degradation. In terms of biological role, involved in 1,2-propanediol (1,2-PD) utilization in the bacterial microcompartment (BMC) dedicated to 1,2-PD degradation by catalyzing the conversion of propanoyl-CoA to propanoyl-phosphate. Also able to catalyze the reverse reaction. Also has phosphate acetyltransferase activity to a lesser extent. Required for optimal growth on 1,2-PD when the BMC is intact. CoA is regenerated within the BMC (for use by PduP) via this enzyme, although there must also be cofactor transport across the BMC. Directly targeted to the BMC. Functionally, the 1,2-PD-specific bacterial microcompartment (BMC) concentrates low levels of 1,2-PD catabolic enzymes, concentrates volatile reaction intermediates thus enhancing pathway flux and keeps the level of toxic, mutagenic propionaldehyde low. The chain is Phosphate propanoyltransferase from Salmonella typhimurium (strain LT2 / SGSC1412 / ATCC 700720).